Here is a 60-residue protein sequence, read N- to C-terminus: Large ribosomal subunit protein eL37 (60 aa).

Cysteine 18, cysteine 21, cysteine 33, and cysteine 36 together coordinate Zn(2+). Residues 18 to 36 (CRRCGKNSYHVRKKVCAAC) form a C4-type zinc finger.

It belongs to the eukaryotic ribosomal protein eL37 family. Requires Zn(2+) as cofactor.

In terms of biological role, binds to the 23S rRNA. This is Large ribosomal subunit protein eL37 (rpl37e) from Methanothermobacter thermautotrophicus (strain ATCC 29096 / DSM 1053 / JCM 10044 / NBRC 100330 / Delta H) (Methanobacterium thermoautotrophicum).